A 788-amino-acid chain; its full sequence is Bifunctional purine biosynthetic protein ADE1 (788 aa).

Positions 1–429 are GARS; the sequence is MSLRILLVGN…NRKDIAYKAF (429 aa). In terms of domain architecture, ATP-grasp spans 114 to 323; the sequence is KDFMKKHNIP…LAEVMLACVE (210 aa). Position 140–201 (140–201) interacts with ATP; sequence VKKVGHRVVI…EEFLEGDELS (62 aa). Mg(2+)-binding residues include E291 and N293. The AIRS stretch occupies residues 439–752; it reads ITYAQAGVSI…VVKQEKVAEV (314 aa).

It in the N-terminal section; belongs to the GARS family. In the C-terminal section; belongs to the AIR synthase family. Mg(2+) serves as cofactor. Mn(2+) is required as a cofactor.

It is found in the cytoplasm. The protein resides in the cytosol. The enzyme catalyses 5-phospho-beta-D-ribosylamine + glycine + ATP = N(1)-(5-phospho-beta-D-ribosyl)glycinamide + ADP + phosphate + H(+). It catalyses the reaction 2-formamido-N(1)-(5-O-phospho-beta-D-ribosyl)acetamidine + ATP = 5-amino-1-(5-phospho-beta-D-ribosyl)imidazole + ADP + phosphate + H(+). Its pathway is purine metabolism; IMP biosynthesis via de novo pathway; 5-amino-1-(5-phospho-D-ribosyl)imidazole from N(2)-formyl-N(1)-(5-phospho-D-ribosyl)glycinamide: step 2/2. It functions in the pathway purine metabolism; IMP biosynthesis via de novo pathway; N(1)-(5-phospho-D-ribosyl)glycinamide from 5-phospho-alpha-D-ribose 1-diphosphate: step 2/2. Its function is as follows. Catalyzes the second and fifth step in the 'de novo' purine biosynthesis pathway; contains phosphoribosylamine--glycine ligase (GARS) and phosphoribosylformylglycinamidine cyclo-ligase (AIRS) activities. In Yarrowia lipolytica (strain CLIB 122 / E 150) (Yeast), this protein is Bifunctional purine biosynthetic protein ADE1.